Here is a 94-residue protein sequence, read N- to C-terminus: Sucrose operon repressor (94 aa).

The HTH lacI-type domain occupies 1 to 56 (MASLHDVARLAGVSKSTVSRVINDEYGVKEATKQKVRQAVAECGYVPNQVAKDLKE). Positions 4-23 (LHDVARLAGVSKSTVSRVIN) form a DNA-binding region, H-T-H motif.

Repressor for the scr operon. Binds D-fructose as an inducer. This Vibrio alginolyticus protein is Sucrose operon repressor (scrR).